A 157-amino-acid polypeptide reads, in one-letter code: Protein Smg homolog (157 aa).

The protein belongs to the Smg family.

The polypeptide is Protein Smg homolog (Pseudoalteromonas translucida (strain TAC 125)).